A 293-amino-acid polypeptide reads, in one-letter code: Bifunctional protein FolD (293 aa).

Residues 164–166, S193, and T234 contribute to the NADP(+) site; that span reads GRS.

Belongs to the tetrahydrofolate dehydrogenase/cyclohydrolase family. As to quaternary structure, homodimer.

The catalysed reaction is (6R)-5,10-methylene-5,6,7,8-tetrahydrofolate + NADP(+) = (6R)-5,10-methenyltetrahydrofolate + NADPH. It carries out the reaction (6R)-5,10-methenyltetrahydrofolate + H2O = (6R)-10-formyltetrahydrofolate + H(+). It participates in one-carbon metabolism; tetrahydrofolate interconversion. Catalyzes the oxidation of 5,10-methylenetetrahydrofolate to 5,10-methenyltetrahydrofolate and then the hydrolysis of 5,10-methenyltetrahydrofolate to 10-formyltetrahydrofolate. The protein is Bifunctional protein FolD of Azobacteroides pseudotrichonymphae genomovar. CFP2.